A 422-amino-acid chain; its full sequence is Cysteate synthase (422 aa).

K105 is subject to N6-(pyridoxal phosphate)lysine. The pyridoxal 5'-phosphate site is built by N131 and T379.

The protein belongs to the threonine synthase family. Cysteate synthase subfamily. As to quaternary structure, homotrimer. It depends on pyridoxal 5'-phosphate as a cofactor.

It catalyses the reaction O-phospho-L-serine + sulfite + H(+) = L-cysteate + phosphate. It functions in the pathway cofactor biosynthesis; coenzyme M biosynthesis. Specifically catalyzes the beta-elimination of phosphate from L-phosphoserine and the beta-addition of sulfite to the dehydroalanine intermediate to produce L-cysteate. The protein is Cysteate synthase of Methanospirillum hungatei JF-1 (strain ATCC 27890 / DSM 864 / NBRC 100397 / JF-1).